Consider the following 562-residue polypeptide: AT-rich interactive domain-containing protein 1 (562 aa).

The region spanning 43 to 136 (KELISLFRPL…YLDAFGRWLN (94 aa)) is the ARID domain. In terms of domain architecture, ELM2 spans 358 to 448 (PCALVGSKFQ…KLELGPAFYM (91 aa)).

It is found in the nucleus. The protein is AT-rich interactive domain-containing protein 1 (ARID1) of Arabidopsis thaliana (Mouse-ear cress).